Consider the following 201-residue polypeptide: Cell division protein SepF (201 aa).

Residues 27–38 are compositionally biased toward basic and acidic residues; the sequence is VQERTSVQRDSR. Positions 27–99 are disordered; the sequence is VQERTSVQRD…PRVQNKDSVR (73 aa). Residues 43-54 are compositionally biased toward polar residues; sequence QEASQRSHMTNS. A compositionally biased stretch (basic and acidic residues) spans 72–81; it reads NRQERQRVQR. Residues 83-92 are compositionally biased toward polar residues; the sequence is NAYQQATPRV.

It belongs to the SepF family. Homodimer. Interacts with FtsZ.

Its subcellular location is the cytoplasm. In terms of biological role, cell division protein that is part of the divisome complex and is recruited early to the Z-ring. Probably stimulates Z-ring formation, perhaps through the cross-linking of FtsZ protofilaments. Its function overlaps with FtsA. This is Cell division protein SepF from Streptococcus agalactiae serotype Ia (strain ATCC 27591 / A909 / CDC SS700).